We begin with the raw amino-acid sequence, 1240 residues long: ATP-dependent helicase/nuclease subunit A (1240 aa).

Residues 12 to 485 (SQWTDDQWKA…IDLAKNFRSR (474 aa)) form the UvrD-like helicase ATP-binding domain. ATP is bound at residue 33–40 (AAAGSGKT). A UvrD-like helicase C-terminal domain is found at 497–804 (KQIMGEEVGE…RIMTIHKSKG (308 aa)).

It belongs to the helicase family. AddA subfamily. Heterodimer of AddA and AddB/RexB. Mg(2+) is required as a cofactor.

The enzyme catalyses Couples ATP hydrolysis with the unwinding of duplex DNA by translocating in the 3'-5' direction.. The catalysed reaction is ATP + H2O = ADP + phosphate + H(+). Functionally, the heterodimer acts as both an ATP-dependent DNA helicase and an ATP-dependent, dual-direction single-stranded exonuclease. Recognizes the chi site generating a DNA molecule suitable for the initiation of homologous recombination. The AddA nuclease domain is required for chi fragment generation; this subunit has the helicase and 3' -&gt; 5' nuclease activities. The sequence is that of ATP-dependent helicase/nuclease subunit A from Bacillus cereus (strain AH820).